We begin with the raw amino-acid sequence, 632 residues long: Nucleoside triphosphatase I (632 aa).

The 163-residue stretch at 42–204 folds into the Helicase ATP-binding domain; sequence FLGLDKMHSL…IMLVNLLRPK (163 aa). Position 55-62 (55-62) interacts with ATP; it reads HETGVGKT. The DEXH box signature appears at 141–144; the sequence is DECH. Residues 367-532 enclose the Helicase C-terminal domain; sequence KFTDVCLRIL…EFTQLFKVFK (166 aa). Positions 457–524 are binding to the cap-specific mRNA (nucleoside-2'-O-)-methyltransferase; it reads DIFILDMTWN…DIIRNKSKEF (68 aa).

The protein belongs to the helicase family. NPH I subfamily. As to quaternary structure, monomer. Interacts (via C-terminus) with RAP94 (via N-terminus). Interacts with the cap-specific mRNA (nucleoside-2'-O-)-methyltransferase.

Its subcellular location is the virion. The enzyme catalyses a ribonucleoside 5'-triphosphate + H2O = a ribonucleoside 5'-diphosphate + phosphate + H(+). In terms of biological role, DNA-dependent ATPase required for providing the needed energy to achieve the termination of early transcripts. Acts in concert with the RAP94 subunit of the virion RNA polymerase and the capping enzyme/VTF to catalyze release of UUUUUNU-containing nascent RNA from the elongation complex. NPH-I must bind ssDNA in order to exhibit ATPase activity. The polypeptide is Nucleoside triphosphatase I (NPH1) (Rabbit fibroma virus (strain Kasza) (RFV)).